A 368-amino-acid polypeptide reads, in one-letter code: Probable endopolygalacturonase I (368 aa).

The N-terminal stretch at 1-18 (MHSYQLLGLAAVGSLVSA) is a signal peptide. The propeptide occupies 19–31 (APAPSRVSEFAKK). Cys-35 and Cys-50 are joined by a disulfide. PbH1 repeat units lie at residues 140-161 (VEDSTFKGINIKNTPVQAISVQ), 162-192 (ATNVHLNDFTIDNSDGDDNGGHNTDGFDISE), and 193-214 (STGVYISGATVKNQDDCIAINS). Asp-207 acts as the Proton donor in catalysis. A disulfide bond links Cys-209 and Cys-225. Residue His-229 is part of the active site. PbH1 repeat units lie at residues 244–265 (VKNVTISDSTVSNSANGVRIKT), 273–295 (VSEITYSNIQLSGITDYGIVIEQ), and 307–352 (STGI…DLSG). The N-linked (GlcNAc...) asparagine glycan is linked to Asn-246. Intrachain disulfides connect Cys-335–Cys-340 and Cys-359–Cys-368.

It belongs to the glycosyl hydrolase 28 family.

The protein localises to the secreted. The enzyme catalyses (1,4-alpha-D-galacturonosyl)n+m + H2O = (1,4-alpha-D-galacturonosyl)n + (1,4-alpha-D-galacturonosyl)m.. In terms of biological role, involved in maceration and soft-rotting of plant tissue. Hydrolyzes the 1,4-alpha glycosidic bonds of de-esterified pectate in the smooth region of the plant cell wall. The protein is Probable endopolygalacturonase I (pgaI) of Aspergillus niger (strain ATCC MYA-4892 / CBS 513.88 / FGSC A1513).